The primary structure comprises 128 residues: uncharacterized protein (128 aa).

Belongs to the HesB/IscA family.

This is an uncharacterized protein from Buchnera aphidicola subsp. Baizongia pistaciae (strain Bp).